We begin with the raw amino-acid sequence, 486 residues long: Cardiolipin synthase A (486 aa).

2 consecutive transmembrane segments (helical) span residues 3–23 and 38–58; these read TVYT…IAGV and MAWL…YLAV. PLD phosphodiesterase domains follow at residues 219–246 and 399–426; these read MDLR…VDPR and EGGL…DMRS. Active-site residues include H224, K226, D231, H404, K406, and D411.

The protein belongs to the phospholipase D family. Cardiolipin synthase subfamily. ClsA sub-subfamily.

The protein resides in the cell inner membrane. The catalysed reaction is 2 a 1,2-diacyl-sn-glycero-3-phospho-(1'-sn-glycerol) = a cardiolipin + glycerol. Functionally, catalyzes the reversible phosphatidyl group transfer from one phosphatidylglycerol molecule to another to form cardiolipin (CL) (diphosphatidylglycerol) and glycerol. In Shigella boydii serotype 4 (strain Sb227), this protein is Cardiolipin synthase A.